The chain runs to 209 residues: Na(+)-translocating NADH-quinone reductase subunit D (209 aa).

Helical transmembrane passes span 42-62, 66-86, 95-115, 131-151, and 178-198; these read VVMT…ISLI, IPNS…VIVV, FEIS…CIVM, FMDG…VGFL, and NGLF…IWAL.

This sequence belongs to the NqrDE/RnfAE family. Composed of six subunits; NqrA, NqrB, NqrC, NqrD, NqrE and NqrF.

The protein localises to the cell inner membrane. It catalyses the reaction a ubiquinone + n Na(+)(in) + NADH + H(+) = a ubiquinol + n Na(+)(out) + NAD(+). NQR complex catalyzes the reduction of ubiquinone-1 to ubiquinol by two successive reactions, coupled with the transport of Na(+) ions from the cytoplasm to the periplasm. NqrA to NqrE are probably involved in the second step, the conversion of ubisemiquinone to ubiquinol. The sequence is that of Na(+)-translocating NADH-quinone reductase subunit D from Serratia proteamaculans (strain 568).